The following is a 181-amino-acid chain: Isopentenyl-diphosphate Delta-isomerase (181 aa).

H25 and H32 together coordinate Mn(2+). A Nudix hydrolase domain is found at 30-164 (PLHLAFSCWL…PWAFSPWMVM (135 aa)). C67 is an active-site residue. H69 contacts Mn(2+). E87 serves as a coordination point for Mg(2+). Residues E114 and E116 each contribute to the Mn(2+) site. E116 is an active-site residue.

The protein belongs to the IPP isomerase type 1 family. Homodimer. Requires Mg(2+) as cofactor. It depends on Mn(2+) as a cofactor.

The protein localises to the cytoplasm. The catalysed reaction is isopentenyl diphosphate = dimethylallyl diphosphate. The protein operates within isoprenoid biosynthesis; dimethylallyl diphosphate biosynthesis; dimethylallyl diphosphate from isopentenyl diphosphate: step 1/1. Catalyzes the 1,3-allylic rearrangement of the homoallylic substrate isopentenyl (IPP) to its highly electrophilic allylic isomer, dimethylallyl diphosphate (DMAPP). This Salmonella paratyphi B (strain ATCC BAA-1250 / SPB7) protein is Isopentenyl-diphosphate Delta-isomerase.